Reading from the N-terminus, the 269-residue chain is Shikimate dehydrogenase (NADP(+)) (269 aa).

Shikimate contacts are provided by residues T22–S24 and T68. K72 (proton acceptor) is an active-site residue. Residues N93 and D104 each coordinate shikimate. Residues G128–A132, N152–R157, and F210 contribute to the NADP(+) site. Y212 lines the shikimate pocket. G233 is an NADP(+) binding site.

It belongs to the shikimate dehydrogenase family. Homodimer.

It catalyses the reaction shikimate + NADP(+) = 3-dehydroshikimate + NADPH + H(+). Its pathway is metabolic intermediate biosynthesis; chorismate biosynthesis; chorismate from D-erythrose 4-phosphate and phosphoenolpyruvate: step 4/7. Functionally, involved in the biosynthesis of the chorismate, which leads to the biosynthesis of aromatic amino acids. Catalyzes the reversible NADPH linked reduction of 3-dehydroshikimate (DHSA) to yield shikimate (SA). This Saccharolobus solfataricus (strain ATCC 35092 / DSM 1617 / JCM 11322 / P2) (Sulfolobus solfataricus) protein is Shikimate dehydrogenase (NADP(+)).